Consider the following 617-residue polypeptide: Dihydroxy-acid dehydratase (617 aa).

Asp81 contributes to the Mg(2+) binding site. [2Fe-2S] cluster is bound at residue Cys122. Mg(2+) is bound by residues Asp123 and Lys124. An N6-carboxylysine modification is found at Lys124. Cys195 serves as a coordination point for [2Fe-2S] cluster. A Mg(2+)-binding site is contributed by Glu490. The active-site Proton acceptor is Ser516.

Belongs to the IlvD/Edd family. In terms of assembly, homodimer. It depends on [2Fe-2S] cluster as a cofactor. Requires Mg(2+) as cofactor.

It carries out the reaction (2R)-2,3-dihydroxy-3-methylbutanoate = 3-methyl-2-oxobutanoate + H2O. It catalyses the reaction (2R,3R)-2,3-dihydroxy-3-methylpentanoate = (S)-3-methyl-2-oxopentanoate + H2O. It functions in the pathway amino-acid biosynthesis; L-isoleucine biosynthesis; L-isoleucine from 2-oxobutanoate: step 3/4. It participates in amino-acid biosynthesis; L-valine biosynthesis; L-valine from pyruvate: step 3/4. In terms of biological role, functions in the biosynthesis of branched-chain amino acids. Catalyzes the dehydration of (2R,3R)-2,3-dihydroxy-3-methylpentanoate (2,3-dihydroxy-3-methylvalerate) into 2-oxo-3-methylpentanoate (2-oxo-3-methylvalerate) and of (2R)-2,3-dihydroxy-3-methylbutanoate (2,3-dihydroxyisovalerate) into 2-oxo-3-methylbutanoate (2-oxoisovalerate), the penultimate precursor to L-isoleucine and L-valine, respectively. The protein is Dihydroxy-acid dehydratase of Acidiphilium cryptum (strain JF-5).